Reading from the N-terminus, the 149-residue chain is Transcription factor HY5-like (149 aa).

The disordered stretch occupies residues 1–77; that stretch reads MSLQRPNGNS…RRRGRNPVDK (77 aa). Residues 23–36 form an interaction with COP1 region; sequence ESDEELLMVPDMEA. Serine 24 is modified (phosphoserine). The segment covering 55–64 has biased composition (polar residues); that stretch reads ELDQTQNGVS. Residues 78–141 form the bZIP domain; it reads EYRSLKRLLR…TMLRKMLINT (64 aa). A basic motif region spans residues 80-100; the sequence is RSLKRLLRNRVSAQQARERKK. The segment at 106 to 134 is leucine-zipper; that stretch reads LESRANELQNNNDQLEEKISTLTNENTML.

The protein belongs to the bZIP family. As to quaternary structure, heterodimer; heterodimerizes with HY5 via the leucine-zipper domains. Interacts with COP1 WD40 domain. Interacts with BBX24/STO and BBX25/STH. In terms of processing, ubiquitinated by COP1. Ubiquitination takes place in darkness and leads to its subsequent degradation, thereby preventing the activation of photomorphogenesis signals.

It is found in the nucleus. Its function is as follows. Transcription factor that promotes photomorphogenesis in light. Acts downstream of the light receptor network and directly affects transcription of light-induced genes. Specifically involved in the blue light specific pathway, suggesting that it participates in transmission of cryptochromes (CRY1 and CRY2) signals to downstream responses. In darkness, its degradation prevents the activation of light-induced genes. The chain is Transcription factor HY5-like (HYH) from Arabidopsis thaliana (Mouse-ear cress).